The primary structure comprises 190 residues: Segregation and condensation protein B (190 aa).

The protein belongs to the ScpB family. Homodimer. Homodimerization may be required to stabilize the binding of ScpA to the Smc head domains. Component of a cohesin-like complex composed of ScpA, ScpB and the Smc homodimer, in which ScpA and ScpB bind to the head domain of Smc. The presence of the three proteins is required for the association of the complex with DNA.

It is found in the cytoplasm. Participates in chromosomal partition during cell division. May act via the formation of a condensin-like complex containing Smc and ScpA that pull DNA away from mid-cell into both cell halves. This is Segregation and condensation protein B from Ruminiclostridium cellulolyticum (strain ATCC 35319 / DSM 5812 / JCM 6584 / H10) (Clostridium cellulolyticum).